The following is a 319-amino-acid chain: tRNA-cytidine(32) 2-sulfurtransferase (319 aa).

The short motif at 43–48 is the PP-loop motif element; the sequence is SGGKDS. Residues Cys118, Cys121, and Cys209 each coordinate [4Fe-4S] cluster.

This sequence belongs to the TtcA family. As to quaternary structure, homodimer. Mg(2+) is required as a cofactor. It depends on [4Fe-4S] cluster as a cofactor.

It is found in the cytoplasm. The catalysed reaction is cytidine(32) in tRNA + S-sulfanyl-L-cysteinyl-[cysteine desulfurase] + AH2 + ATP = 2-thiocytidine(32) in tRNA + L-cysteinyl-[cysteine desulfurase] + A + AMP + diphosphate + H(+). It functions in the pathway tRNA modification. Functionally, catalyzes the ATP-dependent 2-thiolation of cytidine in position 32 of tRNA, to form 2-thiocytidine (s(2)C32). The sulfur atoms are provided by the cysteine/cysteine desulfurase (IscS) system. In Neisseria meningitidis serogroup C / serotype 2a (strain ATCC 700532 / DSM 15464 / FAM18), this protein is tRNA-cytidine(32) 2-sulfurtransferase.